We begin with the raw amino-acid sequence, 349 residues long: Protein RecA (349 aa).

ATP is bound at residue glycine 66–threonine 73.

This sequence belongs to the RecA family.

It localises to the cytoplasm. Functionally, can catalyze the hydrolysis of ATP in the presence of single-stranded DNA, the ATP-dependent uptake of single-stranded DNA by duplex DNA, and the ATP-dependent hybridization of homologous single-stranded DNAs. It interacts with LexA causing its activation and leading to its autocatalytic cleavage. This is Protein RecA from Psychrobacter sp. (strain PRwf-1).